Consider the following 103-residue polypeptide: uncharacterized protein (103 aa).

2 stretches are compositionally biased toward polar residues: residues 1-10 (MSNSCSTSSY) and 18-28 (TRSGSNVNRNY). The segment at 1–28 (MSNSCSTSSYPIRRKTPTRSGSNVNRNY) is disordered.

This is an uncharacterized protein from Acanthamoeba polyphaga mimivirus (APMV).